The sequence spans 178 residues: MSRIGYKTVNVPAGVEVKRDGDQVTVKGPKGELTRTFSSVISMKISDGAVDFDRPDNNNKTRALHGTQRANLNNMVEGVVSGFAKTLKLVGVGYRVQAKGKTLILSVGYSNPVEMAIPETLEVKVPDNTTINISGISKQEVGDFAAEVRAVRSPEPYKGKGIRYENEYVRIREGKTGK.

It belongs to the universal ribosomal protein uL6 family. In terms of assembly, part of the 50S ribosomal subunit.

Functionally, this protein binds to the 23S rRNA, and is important in its secondary structure. It is located near the subunit interface in the base of the L7/L12 stalk, and near the tRNA binding site of the peptidyltransferase center. The protein is Large ribosomal subunit protein uL6 of Levilactobacillus brevis (strain ATCC 367 / BCRC 12310 / CIP 105137 / JCM 1170 / LMG 11437 / NCIMB 947 / NCTC 947) (Lactobacillus brevis).